We begin with the raw amino-acid sequence, 65 residues long: Metallothionein (65 aa).

It belongs to the metallothionein superfamily. Type 4 family.

In terms of biological role, metallothioneins have a high content of cysteine residues that bind various heavy metals. The protein is Metallothionein of Paracentrotus lividus (Common sea urchin).